Here is a 204-residue protein sequence, read N- to C-terminus: Putative 3-methyladenine DNA glycosylase (204 aa).

The protein belongs to the DNA glycosylase MPG family.

In Bacillus mycoides (strain KBAB4) (Bacillus weihenstephanensis), this protein is Putative 3-methyladenine DNA glycosylase.